The following is a 113-amino-acid chain: Large ribosomal subunit protein P1z (113 aa).

Residues Ala87 to Asp113 are disordered. Ser103 bears the Phosphoserine mark.

It belongs to the eukaryotic ribosomal protein P1/P2 family. As to quaternary structure, P1 and P2 exist as dimers at the large ribosomal subunit.

In terms of biological role, plays an important role in the elongation step of protein synthesis. The sequence is that of Large ribosomal subunit protein P1z (RPP1B) from Arabidopsis thaliana (Mouse-ear cress).